The primary structure comprises 205 residues: MKNRFYYNLIIKRLYTRSGGLRKPQKVTNDPESINRKVYWCFEHKPVKRTIINLIYSHNELKIFSNLLNHPTVGSSLIHELSLDGPYTAFFPSNEAMQLINIESFNKLYNDENKLSEFVLNHVTKEYWLYRDLYGSSYQPWLMYNEKREAPEKLRNLLNNDLIVKIEGEFKHCNHSIYLNGSKIIRPNMKCHNGVVHIVDKPIIF.

Positions lysine 48–isoleucine 203 constitute an FAS1 domain. The tract at residues leucine 154–histidine 172 is required for binding to host hemoglobin. 2 heme binding domain regions span residues lysine 171–glycine 181 and cysteine 191–aspartate 200.

Component of the hemozoin formation complex (HFC) composed of falcipains FP2A and/or FP2B, plasmepsins PMII, PMIII/HAP and PMIV, heme detoxifying protein HDP and falcilysin FLN. The HFC complex is involved in hemoglobin degradation and detoxification of heme in the food vacuole during the asexual blood stage. Interacts with falcipain 2; the interaction is direct and enhances HDP catalytic activity. Interacts with host hemoglobin.

It is found in the vacuole. Its subcellular location is the host cytoplasm. The protein localises to the host cytosol. It carries out the reaction 2 Fe(III)-heme b = beta-hematin. In terms of biological role, heme detoxifying enzyme that converts heme to crystalline hemozoin (beta-hematin) to protect the organism from the toxic effects of heme. During its development, P.falciparum proteolyzes vast amounts of host hemoglobin, leading to heme release. In Plasmodium falciparum (isolate 3D7), this protein is Heme ligase.